Here is a 554-residue protein sequence, read N- to C-terminus: Potassium/proton antiporter CemA (554 aa).

The chain crosses the membrane as a helical span at residues 50–70 (SLFVVLFIPFFINIFTKIYVF). The insert stretch occupies residues 113-410 (KTENFFPEKP…VPYNFNKNTE (298 aa)). A run of 3 helical transmembrane segments spans residues 429–449 (ISAI…LFLL), 479–499 (MLLF…EVIF), and 514–534 (IIFL…KYWI).

The protein belongs to the CemA family.

It is found in the plastid. The protein resides in the chloroplast inner membrane. It catalyses the reaction K(+)(in) + H(+)(out) = K(+)(out) + H(+)(in). Contributes to K(+)/H(+) antiport activity by supporting proton efflux to control proton extrusion and homeostasis in chloroplasts in a light-dependent manner to modulate photosynthesis. Prevents excessive induction of non-photochemical quenching (NPQ) under continuous-light conditions. Indirectly promotes efficient inorganic carbon uptake into chloroplasts. The chain is Potassium/proton antiporter CemA from Stigeoclonium helveticum (Green alga).